A 172-amino-acid chain; its full sequence is C-phycocyanin beta chain (172 aa).

The residue at position 72 (N72) is an N4-methylasparagine. The (2R,3E)-phycocyanobilin site is built by C82 and C153.

The protein belongs to the phycobiliprotein family. As to quaternary structure, heterodimer of an alpha and a beta subunit, which further assembles into trimers and the trimers into hexamers. The basic functional unit of phycobiliproteins is a ring-shaped hexamer formed from two back-to-back trimers contacting via the alpha chain subunits. The trimers are composed of alpha/beta subunit heterodimers arranged around a three-fold axis of symmetry. The phycoerythrins also contain a gamma subunit which is located in the center of the hexamer. Contains two covalently linked bilin chromophores.

The protein resides in the plastid. It localises to the chloroplast thylakoid membrane. Light-harvesting photosynthetic bile pigment-protein from the phycobiliprotein complex (phycobilisome, PBS). Phycocyanin is the major phycobiliprotein in the PBS rod. In Porphyra purpurea (Red seaweed), this protein is C-phycocyanin beta chain (cpcB).